Here is a 509-residue protein sequence, read N- to C-terminus: Cobyric acid synthase (509 aa).

Positions E262–W459 constitute a GATase cobBQ-type domain. C343 acts as the Nucleophile in catalysis. The active site involves H451.

It belongs to the CobB/CobQ family. CobQ subfamily.

Its pathway is cofactor biosynthesis; adenosylcobalamin biosynthesis. Its function is as follows. Catalyzes amidations at positions B, D, E, and G on adenosylcobyrinic A,C-diamide. NH(2) groups are provided by glutamine, and one molecule of ATP is hydrogenolyzed for each amidation. In Prochlorococcus marinus (strain MIT 9301), this protein is Cobyric acid synthase.